Reading from the N-terminus, the 654-residue chain is Myrosinase-binding protein 2 (654 aa).

4 Jacalin-type lectin domains span residues 2–151 (SEKV…HFFA), 156–291 (LKHF…HFAP), 346–489 (PNKV…YFAP), and 502–645 (AKKL…HAVP). Pro residues predominate over residues 314–346 (VPAPSPAPAPSPAPAPAPAPAPAPTPAPAPAPP). A disordered region spans residues 314–355 (VPAPSPAPAPSPAPAPAPAPAPAPTPAPAPAPPNKVEALGGN).

This sequence belongs to the jacalin lectin family. In terms of tissue distribution, expressed in flowers. Detected mainly in ovules and styles of immature flowers, but also in pistils, styles, stamens, petals and embryos. Not detected in leaves.

This is Myrosinase-binding protein 2 (MBP2) from Arabidopsis thaliana (Mouse-ear cress).